The following is a 432-amino-acid chain: Glutamyl-tRNA reductase (432 aa).

Residues 49-52 (TCNR), Ser101, 106-108 (ESQ), and Gln112 each bind substrate. Residue Cys50 is the Nucleophile of the active site. 181 to 186 (GTGETI) is an NADP(+) binding site.

The protein belongs to the glutamyl-tRNA reductase family. Homodimer.

The enzyme catalyses (S)-4-amino-5-oxopentanoate + tRNA(Glu) + NADP(+) = L-glutamyl-tRNA(Glu) + NADPH + H(+). Its pathway is porphyrin-containing compound metabolism; protoporphyrin-IX biosynthesis; 5-aminolevulinate from L-glutamyl-tRNA(Glu): step 1/2. Its function is as follows. Catalyzes the NADPH-dependent reduction of glutamyl-tRNA(Glu) to glutamate 1-semialdehyde (GSA). The polypeptide is Glutamyl-tRNA reductase (Xylella fastidiosa (strain M12)).